The following is a 366-amino-acid chain: Phenylalanine--tRNA ligase alpha subunit (366 aa).

Glutamate 259 contributes to the Mg(2+) binding site.

Belongs to the class-II aminoacyl-tRNA synthetase family. Phe-tRNA synthetase alpha subunit type 1 subfamily. As to quaternary structure, tetramer of two alpha and two beta subunits. The cofactor is Mg(2+).

Its subcellular location is the cytoplasm. It carries out the reaction tRNA(Phe) + L-phenylalanine + ATP = L-phenylalanyl-tRNA(Phe) + AMP + diphosphate + H(+). The protein is Phenylalanine--tRNA ligase alpha subunit of Novosphingobium aromaticivorans (strain ATCC 700278 / DSM 12444 / CCUG 56034 / CIP 105152 / NBRC 16084 / F199).